Reading from the N-terminus, the 453-residue chain is Phosphatidylserine decarboxylase proenzyme 1, mitochondrial (453 aa).

The N-terminal 29 residues, 1–29, are a transit peptide targeting the mitochondrion; the sequence is MKPRFPQNVYFLARYSYLRRFQHSQRRTF. Topologically, residues 30–74 are mitochondrial matrix; that stretch reads SSFLNNIRSNYSGARASPLGGSSGAGAGAGGGGTGDSKGNAFLVP. A helical transmembrane segment spans residues 75–93; it reads GATMATILMLGALHARRLY. The Mitochondrial intermembrane segment spans residues 94-453; that stretch reads EDKKIEEKRE…GQALGRWKEE (360 aa). Catalysis depends on charge relay system; for autoendoproteolytic cleavage activity residues D199, H296, and S408. S408 serves as the catalytic Schiff-base intermediate with substrate; via pyruvic acid; for decarboxylase activity. S408 bears the Pyruvic acid (Ser); by autocatalysis mark.

It belongs to the phosphatidylserine decarboxylase family. PSD-B subfamily. Eukaryotic type I sub-subfamily. As to quaternary structure, heterodimer of a large membrane-associated beta subunit and a small pyruvoyl-containing alpha subunit. It depends on pyruvate as a cofactor. Post-translationally, is synthesized initially as an inactive proenzyme. Formation of the active enzyme involves a self-maturation process in which the active site pyruvoyl group is generated from an internal serine residue via an autocatalytic post-translational modification. Two non-identical subunits are generated from the proenzyme in this reaction, and the pyruvate is formed at the N-terminus of the alpha chain, which is derived from the carboxyl end of the proenzyme. The autoendoproteolytic cleavage occurs by a canonical serine protease mechanism, in which the side chain hydroxyl group of the serine supplies its oxygen atom to form the C-terminus of the beta chain, while the remainder of the serine residue undergoes an oxidative deamination to produce ammonia and the pyruvoyl prosthetic group on the alpha chain. During this reaction, the Ser that is part of the protease active site of the proenzyme becomes the pyruvoyl prosthetic group, which constitutes an essential element of the active site of the mature decarboxylase. In terms of tissue distribution, expressed in roots, leaves, stems and flowers.

The protein resides in the mitochondrion. Its subcellular location is the mitochondrion inner membrane. It carries out the reaction a 1,2-diacyl-sn-glycero-3-phospho-L-serine + H(+) = a 1,2-diacyl-sn-glycero-3-phosphoethanolamine + CO2. The protein operates within phospholipid metabolism; phosphatidylethanolamine biosynthesis; phosphatidylethanolamine from CDP-diacylglycerol: step 2/2. In terms of biological role, catalyzes the formation of phosphatidylethanolamine (PtdEtn) from phosphatidylserine (PtdSer). Plays a central role in phospholipid metabolism and in the interorganelle trafficking of phosphatidylserine. Contributes only to a minor proportion of PtdEtn production. This chain is Phosphatidylserine decarboxylase proenzyme 1, mitochondrial (PSD1), found in Arabidopsis thaliana (Mouse-ear cress).